Here is a 348-residue protein sequence, read N- to C-terminus: Sulfate/thiosulfate import ATP-binding protein CysA (348 aa).

The region spanning 3 to 233 (ILIDNISKKF…PATPFVFSLL (231 aa)) is the ABC transporter domain. 35–42 (GPSGSGKS) is an ATP binding site.

Belongs to the ABC transporter superfamily. Sulfate/tungstate importer (TC 3.A.1.6) family.

Its subcellular location is the plastid. The protein resides in the chloroplast. It catalyses the reaction sulfate(out) + ATP + H2O = sulfate(in) + ADP + phosphate + H(+). The enzyme catalyses thiosulfate(out) + ATP + H2O = thiosulfate(in) + ADP + phosphate + H(+). Part of the ABC transporter complex involved in sulfate/thiosulfate import. Responsible for energy coupling to the transport system. The polypeptide is Sulfate/thiosulfate import ATP-binding protein CysA (Mesostigma viride (Green alga)).